Reading from the N-terminus, the 72-residue chain is Translation initiation factor IF-1 (72 aa).

Residues methionine 1–lysine 72 form the S1-like domain.

It belongs to the IF-1 family. Component of the 30S ribosomal translation pre-initiation complex which assembles on the 30S ribosome in the order IF-2 and IF-3, IF-1 and N-formylmethionyl-tRNA(fMet); mRNA recruitment can occur at any time during PIC assembly.

The protein localises to the cytoplasm. In terms of biological role, one of the essential components for the initiation of protein synthesis. Stabilizes the binding of IF-2 and IF-3 on the 30S subunit to which N-formylmethionyl-tRNA(fMet) subsequently binds. Helps modulate mRNA selection, yielding the 30S pre-initiation complex (PIC). Upon addition of the 50S ribosomal subunit IF-1, IF-2 and IF-3 are released leaving the mature 70S translation initiation complex. The sequence is that of Translation initiation factor IF-1 from Campylobacter curvus (strain 525.92).